The sequence spans 31 residues: Photosystem II reaction center protein T (31 aa).

Residues 3-23 (SVAYILVLTMALSVIFFAIAF) form a helical membrane-spanning segment.

This sequence belongs to the PsbT family. In terms of assembly, PSII is composed of 1 copy each of membrane proteins PsbA, PsbB, PsbC, PsbD, PsbE, PsbF, PsbH, PsbI, PsbJ, PsbK, PsbL, PsbM, PsbT, PsbX, PsbY, PsbZ, Psb30/Ycf12, peripheral proteins PsbO, CyanoQ (PsbQ), PsbU, PsbV and a large number of cofactors. It forms dimeric complexes.

The protein resides in the cellular thylakoid membrane. Its function is as follows. Found at the monomer-monomer interface of the photosystem II (PS II) dimer, plays a role in assembly and dimerization of PSII. PSII is a light-driven water plastoquinone oxidoreductase, using light energy to abstract electrons from H(2)O, generating a proton gradient subsequently used for ATP formation. The chain is Photosystem II reaction center protein T from Microcystis aeruginosa (strain NIES-843 / IAM M-2473).